We begin with the raw amino-acid sequence, 481 residues long: Aromatic amino acid aminotransferase C1773.13 (481 aa).

Belongs to the class-I pyridoxal-phosphate-dependent aminotransferase family. Pyridoxal 5'-phosphate serves as cofactor.

It is found in the cytoplasm. The catalysed reaction is an aromatic L-alpha-amino acid + 2-oxoglutarate = an aromatic oxo-acid + L-glutamate. Its function is as follows. Has aromatic amino acid transaminase activity. This Schizosaccharomyces pombe (strain 972 / ATCC 24843) (Fission yeast) protein is Aromatic amino acid aminotransferase C1773.13.